Here is a 370-residue protein sequence, read N- to C-terminus: Divinyl chlorophyll a/b light-harvesting protein PcbD (370 aa).

Helical transmembrane passes span 27-47 (FIASHIGHTGLIAFAAGGSTL), 88-108 (VAAVAIVHLVLSMVYGGGALL), 140-160 (FILGHHLFFFGMACIAFVEWA), 201-221 (VMGGHAFLAFAELTGATIHMV), 248-268 (AVLSWSLAGIGWMAIVAAFWA), and 315-335 (LVNVHYYFGFFFLQGHFWHAL).

It belongs to the PsbB/PsbC family. IsiA/Pcb subfamily. As to quaternary structure, the antenna complex consists of divinyl chlorophylls (a and b) and divinyl chlorophyll a/b binding proteins and binds more divinyl chlorophyll b than does the antenna complex from high-light-adapted Prochlorococcus. Divinyl chlorophyll a is required as a cofactor. Divinyl chlorophyll b serves as cofactor.

The protein resides in the cellular thylakoid membrane. In terms of biological role, the antenna complex functions as a light receptor, it captures and delivers excitation energy to photosystems II and I. The Prochlorales pcb genes are not related to higher plant LHCs. The polypeptide is Divinyl chlorophyll a/b light-harvesting protein PcbD (pcbD) (Prochlorococcus marinus (strain NATL2A)).